The chain runs to 648 residues: Macrolide export ATP-binding/permease protein MacB (648 aa).

Residues 5 to 243 enclose the ABC transporter domain; sequence LELCNVSRSY…QGVDAAVVNT (239 aa). Position 41–48 (41–48) interacts with ATP; it reads GVSGSGKS. 5 helical membrane passes run 273–293, 417–437, 523–543, 578–598, and 611–631; these read LLTM…VVVG, ANVV…IGVA, LFLT…VMNI, LVCL…AFML, and LTAL…FGWL.

The protein belongs to the ABC transporter superfamily. Macrolide exporter (TC 3.A.1.122) family. As to quaternary structure, homodimer. Part of the tripartite efflux system MacAB-TolC, which is composed of an inner membrane transporter, MacB, a periplasmic membrane fusion protein, MacA, and an outer membrane component, TolC. The complex forms a large protein conduit and can translocate molecules across both the inner and outer membranes. Interacts with MacA.

It is found in the cell inner membrane. In terms of biological role, part of the tripartite efflux system MacAB-TolC. MacB is a non-canonical ABC transporter that contains transmembrane domains (TMD), which form a pore in the inner membrane, and an ATP-binding domain (NBD), which is responsible for energy generation. Confers resistance against macrolides. This Salmonella paratyphi A (strain ATCC 9150 / SARB42) protein is Macrolide export ATP-binding/permease protein MacB.